A 715-amino-acid polypeptide reads, in one-letter code: ATP-dependent DNA helicase Hel308 (715 aa).

Positions 8-36 (MPIEDLKLPSNVIEIIKKRGIKKLNPPQT) match the Q motif motif. Residues Q35 and 53–60 (SPTGSGKT) contribute to the ATP site. In terms of domain architecture, Helicase ATP-binding spans 40–203 (KKGLLEGNRL…WLGAEPVATN (164 aa)). A DEAH box motif is present at residues 152 to 155 (DELH). Residues 236–442 (HGDDAIIAYT…ERAFYTFLLG (207 aa)) form the Helicase C-terminal domain.

Belongs to the helicase family. Hel308 subfamily. In terms of assembly, monomer.

The catalysed reaction is Couples ATP hydrolysis with the unwinding of duplex DNA by translocating in the 3'-5' direction.. It carries out the reaction ATP + H2O = ADP + phosphate + H(+). Its function is as follows. DNA-dependent ATPase and 3'-5' DNA helicase that may be involved in repair of stalled replication forks. A low processivity 3'-5' helicase. Unwinds short dsDNA substrates with 3'-overhangs (25 bp dsDNA with 25 base overhang), less active on longer dsDNA substrates. Also unwinds the lagging strand of a stalled replication fork (but the leading strand was not tested). Binds ssDNA, but dsDNA about 35-fold less well. Able to displace streptavidin from biotinylated ssDNA, which is partially inhibited by DNA-binding proteins, suggesting it may play a role in stripping proteins from stalled replication forks. The polypeptide is ATP-dependent DNA helicase Hel308 (Saccharolobus solfataricus (strain 98/2) (Sulfolobus solfataricus)).